The primary structure comprises 122 residues: Large ribosomal subunit protein uL14 (122 aa).

This sequence belongs to the universal ribosomal protein uL14 family. As to quaternary structure, part of the 50S ribosomal subunit. Forms a cluster with proteins L3 and L19. In the 70S ribosome, L14 and L19 interact and together make contacts with the 16S rRNA in bridges B5 and B8.

In terms of biological role, binds to 23S rRNA. Forms part of two intersubunit bridges in the 70S ribosome. The protein is Large ribosomal subunit protein uL14 of Methylobacterium sp. (strain 4-46).